The chain runs to 338 residues: uncharacterized protein (338 aa).

The tract at residues 1–72 is disordered; that stretch reads MASPPILSRE…LNPVEDYDSK (72 aa). The span at 24 to 38 shows a compositional bias: polar residues; sequence GGNSEVNIDPSASSS. The segment covering 49–58 has biased composition (basic and acidic residues); sequence ADTKIDPHLL. Residues 59–68 are compositionally biased toward acidic residues; it reads EEDDLNPVED.

It is found in the cytoplasm. The protein localises to the nucleus. This is an uncharacterized protein from Schizosaccharomyces pombe (strain 972 / ATCC 24843) (Fission yeast).